A 352-amino-acid polypeptide reads, in one-letter code: Homoserine O-acetyltransferase (352 aa).

One can recognise an AB hydrolase-1 domain in the interval 37–330 (NAVLVCHALT…APHGHDTFLI (294 aa)). Residue Ser-133 is the Nucleophile of the active site. Arg-206 is a substrate binding site. Active-site residues include Asp-296 and His-325. Residue Asp-326 participates in substrate binding.

This sequence belongs to the AB hydrolase superfamily. MetX family. As to quaternary structure, homodimer.

The protein localises to the cytoplasm. The enzyme catalyses L-homoserine + acetyl-CoA = O-acetyl-L-homoserine + CoA. Its pathway is amino-acid biosynthesis; L-methionine biosynthesis via de novo pathway; O-acetyl-L-homoserine from L-homoserine: step 1/1. In terms of biological role, transfers an acetyl group from acetyl-CoA to L-homoserine, forming acetyl-L-homoserine. The chain is Homoserine O-acetyltransferase from Salinibacter ruber (strain DSM 13855 / M31).